A 380-amino-acid polypeptide reads, in one-letter code: Ceramide synthase 2 (380 aa).

Topologically, residues 1-40 (MLQTLHDYFWWERLWLPVNLTWADLEDRDGRVYAKASDLY) are lumenal. N-linked (GlcNAc...) asparagine glycosylation is present at Asn19. A helical transmembrane segment spans residues 41–61 (ITLPLALLFLIIRYFFELYVA). Residues 67–128 (LLNVKEKTRL…RRRRNQDRPS (62 aa)) are homeobox-like. A TLC domain is found at 131–332 (KKFREASWRF…ILRMAHKFIT (202 aa)). 4 consecutive transmembrane segments (helical) span residues 140–160 (FTFYLIAFIAGTAVIVDKPWF), 181–201 (WYYMIELSFYWSLLFSIASDV), 209–229 (QIIHHVATIILISFSWFANYV), and 264–284 (IFIVFAIVFIITRLVILPFWI). The Last loop motif signature appears at 291-300 (YPLELYPAFF). A helical membrane pass occupies residues 304 to 324 (FFNFMMGVLQLLHIFWAYLIL). The Cytoplasmic segment spans residues 325–380 (RMAHKFITGKVVEDERSDREETESSEGEEAAAGGGAKNRPLANGHPILNNNHRKND). A disordered region spans residues 338-380 (DERSDREETESSEGEEAAAGGGAKNRPLANGHPILNNNHRKND). Ser341 carries the post-translational modification Phosphoserine. A compositionally biased stretch (acidic residues) spans 344–353 (EETESSEGEE). Thr346 is modified (phosphothreonine). Phosphoserine occurs at positions 348 and 349.

Interacts with ATP6V0C, ASGR1, ASGR2 and SLC22A1/OCT1. Interacts with ELOV1, HSD17B12 and TECR. Interacts with NDUFS2. Acetylated. Deacetylation by SIRT3 increases enzyme activity and promotes mitochondrial ceramide accumulation. Post-translationally, phosphorylated at the C-terminus by CK2, leading to increase the ceramide synthase activity.

The protein resides in the endoplasmic reticulum membrane. The catalysed reaction is a very long-chain fatty acyl-CoA + a sphingoid base = an N-(very-long-chain fatty acyl)-sphingoid base + CoA + H(+). The enzyme catalyses docosanoyl-CoA + sphinganine = N-docosanoylsphinganine + CoA + H(+). It catalyses the reaction tetracosanoyl-CoA + sphinganine = N-tetracosanoylsphinganine + CoA + H(+). It carries out the reaction hexacosanoyl-CoA + sphinganine = N-hexacosanoylsphinganine + CoA + H(+). The catalysed reaction is (15Z)-tetracosenoyl-CoA + sphinganine = N-(15Z-tetracosenoyl)-sphinganine + CoA + H(+). The enzyme catalyses 2-hydroxytetracosanoyl-CoA + sphinganine = N-(2-hydroxytetracosanoyl)-sphinganine + CoA + H(+). It catalyses the reaction 2-hydroxydocosanoyl-CoA + sphinganine = N-(2-hydroxydocosanoyl)-sphinganine + CoA + H(+). It carries out the reaction 2-hydroxytetracosenoyl-CoA + sphinganine = N-(2-hydroxytetracosenoyl)-sphinganine + CoA + H(+). The catalysed reaction is tetracosenoyl-CoA + sphinganine = an N-tetracosenoylsphinganine + CoA + H(+). The enzyme catalyses hexacosenoyl-CoA + sphinganine = N-hexacosenoylsphinganine + CoA + H(+). It catalyses the reaction tetracosanoyl-CoA + sphing-4-enine = N-tetracosanoyl-sphing-4-enine + CoA + H(+). It carries out the reaction tetracosenoyl-CoA + sphing-4-enine = N-(tetracosenoyl)-sphing-4-enine + CoA + H(+). The catalysed reaction is heptadecasphing-4-enine + tetracosanoyl-CoA = N-tetracosanoyl-heptadecasphing-4-enine + CoA + H(+). The enzyme catalyses a fatty acyl-CoA + sphing-4-enine = an N-acylsphing-4-enine + CoA + H(+). It catalyses the reaction sphing-4-enine + hexadecanoyl-CoA = N-hexadecanoylsphing-4-enine + CoA + H(+). It carries out the reaction sphing-4-enine + octadecanoyl-CoA = N-octadecanoylsphing-4-enine + CoA + H(+). The catalysed reaction is eicosanoyl-CoA + sphing-4-enine = N-eicosanoyl-sphing-4-enine + CoA + H(+). The enzyme catalyses sphinganine + hexadecanoyl-CoA = N-hexadecanoylsphinganine + CoA + H(+). It catalyses the reaction sphinganine + octadecanoyl-CoA = N-(octadecanoyl)-sphinganine + CoA + H(+). It carries out the reaction sphinganine + (9Z)-octadecenoyl-CoA = N-(9Z-octadecenoyl)-sphinganine + CoA + H(+). The catalysed reaction is eicosanoyl-CoA + sphinganine = N-eicosanoylsphinganine + CoA + H(+). It functions in the pathway lipid metabolism; sphingolipid metabolism. Ceramide synthase activity is inhibited by sphingosine-1-phosphate. Functionally, ceramide synthase that catalyzes the transfer of the acyl chain from acyl-CoA to a sphingoid base, with high selectivity toward very-long-chain fatty acyl-CoA (chain length C22-C27). N-acylates sphinganine and sphingosine bases to form dihydroceramides and ceramides in de novo synthesis and salvage pathways, respectively. Plays a non-redundant role in the synthesis of ceramides with very-long-chain fatty acids in kidney, liver and brain. Regulates the abundance of myelin-specific sphingolipids galactosylceramide and sulfatide that affects myelin sheath architecture and motor neuron functions. In Bos taurus (Bovine), this protein is Ceramide synthase 2.